Consider the following 566-residue polypeptide: CTP synthase (566 aa).

The interval 1-282 (MSIKRAQLGG…DAYIIDQLGL (282 aa)) is amidoligase domain. CTP is bound at residue Ser-23. Residue Ser-23 coordinates UTP. Residues 24–29 (SLGKGL) and Asp-81 contribute to the ATP site. Mg(2+) contacts are provided by Asp-81 and Glu-156. CTP-binding positions include 163-165 (DIE), 203-208 (KTKPTQ), and Lys-239. UTP is bound by residues 203–208 (KTKPTQ) and Lys-239. Positions 308-556 (TIGLVGKYID…IGAALDRQKA (249 aa)) constitute a Glutamine amidotransferase type-1 domain. Residue Gly-371 participates in L-glutamine binding. The active-site Nucleophile; for glutamine hydrolysis is Cys-398. L-glutamine is bound by residues 399–402 (LGLQ), Glu-422, and Arg-482. Residues His-529 and Glu-531 contribute to the active site.

It belongs to the CTP synthase family. In terms of assembly, homotetramer.

The catalysed reaction is UTP + L-glutamine + ATP + H2O = CTP + L-glutamate + ADP + phosphate + 2 H(+). It catalyses the reaction L-glutamine + H2O = L-glutamate + NH4(+). It carries out the reaction UTP + NH4(+) + ATP = CTP + ADP + phosphate + 2 H(+). The protein operates within pyrimidine metabolism; CTP biosynthesis via de novo pathway; CTP from UDP: step 2/2. With respect to regulation, allosterically activated by GTP, when glutamine is the substrate; GTP has no effect on the reaction when ammonia is the substrate. The allosteric effector GTP functions by stabilizing the protein conformation that binds the tetrahedral intermediate(s) formed during glutamine hydrolysis. Inhibited by the product CTP, via allosteric rather than competitive inhibition. Catalyzes the ATP-dependent amination of UTP to CTP with either L-glutamine or ammonia as the source of nitrogen. Regulates intracellular CTP levels through interactions with the four ribonucleotide triphosphates. The polypeptide is CTP synthase (Leifsonia xyli subsp. xyli (strain CTCB07)).